We begin with the raw amino-acid sequence, 621 residues long: UvrABC system protein C (621 aa).

In terms of domain architecture, GIY-YIG spans 11 to 90 (TTPGVYLYKD…IKKHRPRYNI (80 aa)). In terms of domain architecture, UVR spans 200-235 (KELVELLQKDMLYASEALEFEKAATLRDQIQAIKHT).

This sequence belongs to the UvrC family. As to quaternary structure, interacts with UvrB in an incision complex.

It is found in the cytoplasm. Its function is as follows. The UvrABC repair system catalyzes the recognition and processing of DNA lesions. UvrC both incises the 5' and 3' sides of the lesion. The N-terminal half is responsible for the 3' incision and the C-terminal half is responsible for the 5' incision. This chain is UvrABC system protein C, found in Lawsonia intracellularis (strain PHE/MN1-00).